A 65-amino-acid chain; its full sequence is Small ribosomal subunit protein bS21 (65 aa).

It belongs to the bacterial ribosomal protein bS21 family.

The protein is Small ribosomal subunit protein bS21 of Aster yellows phytoplasma.